Reading from the N-terminus, the 236-residue chain is 15,16-dihydrobiliverdin:ferredoxin oxidoreductase (236 aa).

It belongs to the HY2 family.

The catalysed reaction is 15,16-dihydrobiliverdin + oxidized 2[4Fe-4S]-[ferredoxin] = biliverdin IXalpha + reduced 2[4Fe-4S]-[ferredoxin] + 2 H(+). In terms of biological role, catalyzes the two-electron reduction of biliverdin IX-alpha at the C15 methine bridge. This chain is 15,16-dihydrobiliverdin:ferredoxin oxidoreductase, found in Prochlorococcus marinus (strain MIT 9515).